A 52-amino-acid polypeptide reads, in one-letter code: Teratocyte protein CftICK-I (52 aa).

The signal sequence occupies residues 1 to 19; it reads MYKLCILFLVVIFAVMAIA. 3 disulfides stabilise this stretch: cysteine 22–cysteine 37, cysteine 29–cysteine 41, and cysteine 36–cysteine 51.

In terms of tissue distribution, abundantly expressed by teratocytes, which are extra-embryonic cells released by parasitoid wasps into their hosts during larval eclosion.

Its subcellular location is the secreted. In terms of biological role, this endoparasitoid wasp peptide has immununosuppressive, antimicrobial and insecticidal activities. Suppress cellular immunity which is detectable as a reduction of hemocyte encapsulation in the host. Shows potent antifungal activity against C.albicans (MIC~0.25 ug/ml). In vivo, ingestion of this peptide (probably at excessive doses) increases larval mortality and reduces leaf consumption of D.saccharalis, a permissive host for C.flavipes. The chain is Teratocyte protein CftICK-I from Cotesia flavipes (Parasitic wasp).